A 236-amino-acid chain; its full sequence is Small ribosomal subunit protein uS3 (236 aa).

Residues 39-107 (IREFLTEELK…DTSLNIVEVR (69 aa)) enclose the KH type-2 domain. The tract at residues 214–236 (ASERRAVEGDNQGSSSNRRRENA) is disordered.

It belongs to the universal ribosomal protein uS3 family. Part of the 30S ribosomal subunit. Forms a tight complex with proteins S10 and S14.

Functionally, binds the lower part of the 30S subunit head. Binds mRNA in the 70S ribosome, positioning it for translation. The protein is Small ribosomal subunit protein uS3 of Brucella canis (strain ATCC 23365 / NCTC 10854 / RM-666).